A 479-amino-acid polypeptide reads, in one-letter code: tRNA-2-methylthio-N(6)-dimethylallyladenosine synthase (479 aa).

The MTTase N-terminal domain occupies 6-122 (KTVYIKTVGC…IPDMLTKVTS (117 aa)). [4Fe-4S] cluster is bound by residues Cys-15, Cys-51, Cys-85, Cys-172, Cys-176, and Cys-179. Residues 158-390 (RPTPFQAYLR…LAVQDRISKE (233 aa)) form the Radical SAM core domain. A TRAM domain is found at 393 to 464 (QKLIGDTVEV…SHTLIGRVKT (72 aa)).

Belongs to the methylthiotransferase family. MiaB subfamily. Monomer. [4Fe-4S] cluster serves as cofactor.

It is found in the cytoplasm. The catalysed reaction is N(6)-dimethylallyladenosine(37) in tRNA + (sulfur carrier)-SH + AH2 + 2 S-adenosyl-L-methionine = 2-methylsulfanyl-N(6)-dimethylallyladenosine(37) in tRNA + (sulfur carrier)-H + 5'-deoxyadenosine + L-methionine + A + S-adenosyl-L-homocysteine + 2 H(+). In terms of biological role, catalyzes the methylthiolation of N6-(dimethylallyl)adenosine (i(6)A), leading to the formation of 2-methylthio-N6-(dimethylallyl)adenosine (ms(2)i(6)A) at position 37 in tRNAs that read codons beginning with uridine. The protein is tRNA-2-methylthio-N(6)-dimethylallyladenosine synthase of Rhodopirellula baltica (strain DSM 10527 / NCIMB 13988 / SH1).